We begin with the raw amino-acid sequence, 327 residues long: Cyclic AMP-responsive element-binding protein 1 (327 aa).

Disordered stretches follow at residues 1 to 29 (MTMDSGADNQQSGDAAVTEAESQQMTVQA) and 94 to 113 (SEDSQESVDSVTDSQKRREI). The region spanning 8–146 (DNQQSGDAAV…IEEEKSEEET (139 aa)) is the KID domain. Residues 20 to 29 (AESQQMTVQA) are compositionally biased toward polar residues. Ser-119 is modified (phosphoserine; by CaMK1, CaMK2, CaMK4, PKB/AKT1 or PKB/AKT2, RPS6KA3, RPS6KA4, RPS6KA5 and SGK1). A Glycyl lysine isopeptide (Lys-Gly) (interchain with G-Cter in SUMO2) cross-link involves residue Lys-122. The segment at 126 to 149 (DLSSDAPGVPRIEEEKSEEETSAP) is disordered. Position 128 is a phosphoserine; by CaMK2 (Ser-128). A Phosphoserine; by HIPK2 modification is found at Ser-257. Residues 269–327 (ARKREVRLMKNREAARECRRKKKEYVKCLENRVAVLENQNKTLIEELKALKDLYCHKSD) enclose the bZIP domain. The interval 270–295 (RKREVRLMKNREAARECRRKKKEYVK) is basic motif. Glycyl lysine isopeptide (Lys-Gly) (interchain with G-Cter in SUMO1) cross-links involve residues Lys-271 and Lys-290. Residues 297 to 318 (LENRVAVLENQNKTLIEELKAL) are leucine-zipper.

Belongs to the bZIP family. Interacts with PPRC1. Binds DNA as a dimer. This dimer is stabilized by magnesium ions. Interacts, through the bZIP domain, with the coactivators CRTC1/TORC1, CRTC2/TORC2 and CRTC3/TORC3. When phosphorylated on Ser-119, binds CREBBP. Interacts with CREBL2; regulates CREB1 phosphorylation, stability and transcriptional activity. Interacts (phosphorylated form) with TOX3. Interacts with ARRB1. Binds to HIPK2. Interacts with SGK1. Interacts with TSSK4; this interaction facilitates phosphorylation on Ser-119. Forms a complex with KMT2A and CREBBP. Interacts with TOX4; CREB1 is required for full induction of TOX4-dependent activity and the interaction is increased by cAMP and inhibited by insulin. In terms of processing, phosphorylation of Ser-119 allows CREBBP binding. Stimulated by phosphorylation. Phosphorylation of both Ser-128 and Ser-119 in the SCN regulates the activity of CREB and participate in circadian rhythm generation. Phosphorylated upon calcium influx by CaMK4 and CaMK2 on Ser-119. CaMK4 is much more potent than CaMK2 in activating CREB. Phosphorylated by CaMK2 on Ser-128. Phosphorylation of Ser-128 blocks CREB-mediated transcription even when Ser-119 is phosphorylated. Phosphorylated by CaMK1. Phosphorylation of Ser-257 by HIPK2 in response to genotoxic stress promotes CREB1 activity, facilitating the recruitment of the coactivator CBP. Phosphorylated at Ser-119 by RPS6KA3, RPS6KA4 and RPS6KA5 in response to mitogenic or stress stimuli. CREBL2 positively regulates phosphorylation at Ser-119 thereby stimulating CREB1 transcriptional activity. In liver, phosphorylation is induced by fasting or glucagon in a circadian fashion. Phosphorylated by TSSK4 on Ser-119. Sumoylated with SUMO1. Sumoylation on Lys-290, but not on Lys-271, is required for nuclear localization of this protein. Sumoylation is enhanced under hypoxia, promoting nuclear localization and stabilization.

The protein localises to the nucleus. Phosphorylation-dependent transcription factor that stimulates transcription upon binding to the DNA cAMP response element (CRE), a sequence present in many viral and cellular promoters. Transcription activation is enhanced by the TORC coactivators which act independently of Ser-119 phosphorylation. Involved in different cellular processes including the synchronization of circadian rhythmicity and the differentiation of adipose cells. Regulates the expression of apoptotic and inflammatory response factors in cardiomyocytes in response to ERFE-mediated activation of AKT signaling. The polypeptide is Cyclic AMP-responsive element-binding protein 1 (Creb1) (Rattus norvegicus (Rat)).